The primary structure comprises 739 residues: Phosphoribosylformylglycinamidine synthase subunit PurL (739 aa).

Histidine 55 is a catalytic residue. ATP contacts are provided by tyrosine 58 and lysine 97. Residue glutamate 99 coordinates Mg(2+). Residues 100–103 (SHNH) and arginine 122 each bind substrate. The Proton acceptor role is filled by histidine 101. Mg(2+) is bound at residue aspartate 123. Substrate is bound at residue glutamine 246. Position 276 (aspartate 276) interacts with Mg(2+). Residue 320-322 (ESQ) coordinates substrate. 2 residues coordinate ATP: aspartate 502 and glycine 539. Mg(2+) is bound at residue asparagine 540. Residue serine 542 coordinates substrate.

The protein belongs to the FGAMS family. In terms of assembly, monomer. Part of the FGAM synthase complex composed of 1 PurL, 1 PurQ and 2 PurS subunits.

The protein localises to the cytoplasm. It catalyses the reaction N(2)-formyl-N(1)-(5-phospho-beta-D-ribosyl)glycinamide + L-glutamine + ATP + H2O = 2-formamido-N(1)-(5-O-phospho-beta-D-ribosyl)acetamidine + L-glutamate + ADP + phosphate + H(+). The protein operates within purine metabolism; IMP biosynthesis via de novo pathway; 5-amino-1-(5-phospho-D-ribosyl)imidazole from N(2)-formyl-N(1)-(5-phospho-D-ribosyl)glycinamide: step 1/2. Part of the phosphoribosylformylglycinamidine synthase complex involved in the purines biosynthetic pathway. Catalyzes the ATP-dependent conversion of formylglycinamide ribonucleotide (FGAR) and glutamine to yield formylglycinamidine ribonucleotide (FGAM) and glutamate. The FGAM synthase complex is composed of three subunits. PurQ produces an ammonia molecule by converting glutamine to glutamate. PurL transfers the ammonia molecule to FGAR to form FGAM in an ATP-dependent manner. PurS interacts with PurQ and PurL and is thought to assist in the transfer of the ammonia molecule from PurQ to PurL. This Lactiplantibacillus plantarum (strain ATCC BAA-793 / NCIMB 8826 / WCFS1) (Lactobacillus plantarum) protein is Phosphoribosylformylglycinamidine synthase subunit PurL.